The sequence spans 102 residues: Small ribosomal subunit protein uS10 (102 aa).

Belongs to the universal ribosomal protein uS10 family. In terms of assembly, part of the 30S ribosomal subunit.

In terms of biological role, involved in the binding of tRNA to the ribosomes. The protein is Small ribosomal subunit protein uS10 of Brevibacillus brevis (strain 47 / JCM 6285 / NBRC 100599).